Reading from the N-terminus, the 173-residue chain is Transcription factor E (173 aa).

One can recognise an HTH TFE/IIEalpha-type domain in the interval 6 to 89; it reads PLEELLEFVR…YWYVDRETLN (84 aa).

Belongs to the TFE family. In terms of assembly, monomer. Interaction with RNA polymerase subunits RpoF and RpoE is necessary for Tfe stimulatory transcription activity. Able to interact with Tbp and RNA polymerase in the absence of DNA promoter. Interacts both with the preinitiation and elongation complexes.

Its function is as follows. Transcription factor that plays a role in the activation of archaeal genes transcribed by RNA polymerase. Facilitates transcription initiation by enhancing TATA-box recognition by TATA-box-binding protein (Tbp), and transcription factor B (Tfb) and RNA polymerase recruitment. Not absolutely required for transcription in vitro, but particularly important in cases where Tbp or Tfb function is not optimal. It dynamically alters the nucleic acid-binding properties of RNA polymerases by stabilizing the initiation complex and destabilizing elongation complexes. Seems to translocate with the RNA polymerase following initiation and acts by binding to the non template strand of the transcription bubble in elongation complexes. The sequence is that of Transcription factor E from Ignicoccus hospitalis (strain KIN4/I / DSM 18386 / JCM 14125).